The primary structure comprises 364 residues: Endopolygalacturonase B (364 aa).

Residues 1–20 form the signal peptide; it reads MHFLQNSLIAAAMGAALVAA. Positions 21-29 are excised as a propeptide; sequence APAADLDAR. Cys32 and Cys47 are oxidised to a cystine. Asn138 carries N-linked (GlcNAc...) asparagine glycosylation. 6 PbH1 repeats span residues 159 to 188, 189 to 210, 211 to 231, 240 to 261, 269 to 291, and 303 to 348; these read SDHL…DIGS, STYI…AINS, GEHI…SIGS, VKSV…RIKT, VTDV…IVEQ, and TNGV…DITG. Residue Asp203 is the Proton donor of the active site. Cys205 and Cys221 are disulfide-bonded. The active site involves His225. Cystine bridges form between Cys331/Cys336 and Cys355/Cys364.

It belongs to the glycosyl hydrolase 28 family.

It is found in the secreted. The enzyme catalyses (1,4-alpha-D-galacturonosyl)n+m + H2O = (1,4-alpha-D-galacturonosyl)n + (1,4-alpha-D-galacturonosyl)m.. Involved in maceration and soft-rotting of plant tissue. Hydrolyzes the 1,4-alpha glycosidic bonds of de-esterified pectate in the smooth region of the plant cell wall. This Emericella nidulans (strain FGSC A4 / ATCC 38163 / CBS 112.46 / NRRL 194 / M139) (Aspergillus nidulans) protein is Endopolygalacturonase B (pgaB).